Here is a 589-residue protein sequence, read N- to C-terminus: Mitogen-activated protein kinase 8 (589 aa).

The tract at residues 18–56 is disordered; sequence RPSSSSSSSSSNNNNNNHEQPIFNSSSFSSSSNPNHSAN. Composition is skewed to low complexity over residues 20 to 34 and 41 to 56; these read SSSS…NNNN and NSSS…HSAN. The 292-residue stretch at 104 to 395 folds into the Protein kinase domain; the sequence is YQIQEVVGKG…AEDALADPYF (292 aa). ATP-binding positions include 110-118 and Lys-133; that span reads VGKGSYGVV. Asp-230 (proton acceptor) is an active-site residue. Thr-266 carries the phosphothreonine modification. The TXY signature appears at 266 to 268; the sequence is TDY. The residue at position 268 (Tyr-268) is a Phosphotyrosine. Position 271 is a phosphothreonine (Thr-271). Positions 474 to 589 are disordered; that stretch reads NQGKPGAAGG…TDKVASLHNS (116 aa).

Belongs to the protein kinase superfamily. CMGC Ser/Thr protein kinase family. MAP kinase subfamily. Interacts with CAM3, CAM4 and CAM7 in an calcium-dependent manner. Post-translationally, dually phosphorylated on Thr-266 and Tyr-268, which activates the enzyme. Autophosphorylated. In terms of tissue distribution, ubiquitous.

The catalysed reaction is L-seryl-[protein] + ATP = O-phospho-L-seryl-[protein] + ADP + H(+). The enzyme catalyses L-threonyl-[protein] + ATP = O-phospho-L-threonyl-[protein] + ADP + H(+). Its activity is regulated as follows. Activated by threonine and tyrosine phosphorylation. Activated by two independent mechanisms, the binding of CAMs in a calcium-dependent manner and the phosphorylation by MAP kinase kinase MKK3. Activated in response to mechanical wounding, hydrogen peroxide and jasmonic acid (JA). In terms of biological role, MKK3-MPK8 and CAMs-MPK8 modules negatively regulates ROS accumulation through controlling expression of the RBOHD gene during wounding. The polypeptide is Mitogen-activated protein kinase 8 (MPK8) (Arabidopsis thaliana (Mouse-ear cress)).